We begin with the raw amino-acid sequence, 256 residues long: Tryptophan synthase alpha chain (256 aa).

Residues glutamate 46 and aspartate 57 each act as proton acceptor in the active site.

Belongs to the TrpA family. Tetramer of two alpha and two beta chains.

The catalysed reaction is (1S,2R)-1-C-(indol-3-yl)glycerol 3-phosphate + L-serine = D-glyceraldehyde 3-phosphate + L-tryptophan + H2O. It participates in amino-acid biosynthesis; L-tryptophan biosynthesis; L-tryptophan from chorismate: step 5/5. Its function is as follows. The alpha subunit is responsible for the aldol cleavage of indoleglycerol phosphate to indole and glyceraldehyde 3-phosphate. The chain is Tryptophan synthase alpha chain from Bacteroides thetaiotaomicron (strain ATCC 29148 / DSM 2079 / JCM 5827 / CCUG 10774 / NCTC 10582 / VPI-5482 / E50).